The following is a 315-amino-acid chain: Calcium homeostasis modulator protein 6 (315 aa).

The Cytoplasmic portion of the chain corresponds to 1-21 (MEKFKAVLDLQIKHRSALGYG). Residues 22–37 (LVTLLTAGGEKIFSTV) traverse the membrane as a helical segment. The Extracellular segment spans residues 38–46 (VFQCPCTAT). 3 disulfides stabilise this stretch: Cys-41/Cys-127, Cys-43/Cys-156, and Cys-140/Cys-147. A helical membrane pass occupies residues 47 to 68 (LNLTYGLVFLLVPALALFLLGY). At 69–103 (ALSARTWRLLTGCCSRSASTRSSSGLRSTLVCAQV) the chain is on the cytoplasmic side. The helical transmembrane segment at 104–128 (SAVAALAPLTWVAVALLGGSFYQCA) threads the bilayer. Over 129 to 169 (VSGSTRLASYLCKDRNHSCIAKLPQVPCNKQEAEMQEILSQ) the chain is Extracellular. A helical membrane pass occupies residues 170 to 192 (LKAQSQVLGWVLIAAVIFLLLVF). Residues 193 to 315 (KCVSRCFSPV…DAAMANTHGV (123 aa)) are Cytoplasmic-facing.

Belongs to the CALHM family. Oligomerizes to form decameric and undecameric channels.

Its subcellular location is the cell membrane. It catalyses the reaction ATP(in) = ATP(out). Functionally, pore-forming subunit of an ATP-permeable channel. In response to pathogen-derived and proinflammatory stimuli, relocates from intracellular compartments to NK-dendritic cell and NK-macrophage immune synapses where it mediates ATP efflux and NK cell activation involved in antimicrobial and antitumor responses. May assemble to form gap junction channel-like structures with gating and ion conductance likely regulated by membrane lipids and voltage rather than by extracellular calcium levels. The chain is Calcium homeostasis modulator protein 6 from Rattus norvegicus (Rat).